Reading from the N-terminus, the 253-residue chain is Protein PET20, mitochondrial (253 aa).

Residues 1-36 constitute a mitochondrion transit peptide; it reads MLKLARPFIPPLSRNNAISSGIVLTSRRFQSSFTFL. The tract at residues 44–93 is disordered; it reads KNQMKSKRKKGSKKAAYHRQPPEHEHTAPLIKQNKTITKKEHSDVRGSHL. Residues 47 to 60 are compositionally biased toward basic residues; it reads MKSKRKKGSKKAAY. A compositionally biased stretch (basic and acidic residues) spans 81–90; that stretch reads TKKEHSDVRG.

Its subcellular location is the mitochondrion. In terms of biological role, required for respiratory growth, stability of the mitochondrial genome and for proper assembly or maintenance of mitochondrial proteins. The chain is Protein PET20, mitochondrial (PET20) from Saccharomyces cerevisiae (strain ATCC 204508 / S288c) (Baker's yeast).